The sequence spans 38 residues: Photosystem II reaction center protein L (38 aa).

A helical transmembrane segment spans residues 17–37 (SLYWGLLLIFVLAILFSSYIF).

This sequence belongs to the PsbL family. As to quaternary structure, PSII is composed of 1 copy each of membrane proteins PsbA, PsbB, PsbC, PsbD, PsbE, PsbF, PsbH, PsbI, PsbJ, PsbK, PsbL, PsbM, PsbT, PsbX, PsbY, PsbZ, Psb30/Ycf12, at least 3 peripheral proteins of the oxygen-evolving complex and a large number of cofactors. It forms dimeric complexes.

It localises to the plastid. The protein localises to the chloroplast thylakoid membrane. One of the components of the core complex of photosystem II (PSII). PSII is a light-driven water:plastoquinone oxidoreductase that uses light energy to abstract electrons from H(2)O, generating O(2) and a proton gradient subsequently used for ATP formation. It consists of a core antenna complex that captures photons, and an electron transfer chain that converts photonic excitation into a charge separation. This subunit is found at the monomer-monomer interface and is required for correct PSII assembly and/or dimerization. The chain is Photosystem II reaction center protein L from Mesostigma viride (Green alga).